The primary structure comprises 558 residues: Glutamine--tRNA ligase (558 aa).

The short motif at P36–H46 is the 'HIGH' region element. ATP contacts are provided by residues E37–N39 and H43–S49. L-glutamine is bound by residues D69 and Y214. ATP contacts are provided by residues T233, R263–L264, and L271–K273. A 'KMSKS' region motif is present at residues L270–R274.

This sequence belongs to the class-I aminoacyl-tRNA synthetase family. As to quaternary structure, monomer.

It is found in the cytoplasm. The enzyme catalyses tRNA(Gln) + L-glutamine + ATP = L-glutaminyl-tRNA(Gln) + AMP + diphosphate. The sequence is that of Glutamine--tRNA ligase from Nitrobacter hamburgensis (strain DSM 10229 / NCIMB 13809 / X14).